The sequence spans 285 residues: RNA 5'-monophosphate methyltransferase (285 aa).

Positions 1-28 (MAATQELSKGGVEEAVEEDDPAALKPGA) are disordered. Residues arginine 46, asparagine 77, aspartate 111, 136–137 (DI), and methionine 165 contribute to the S-adenosyl-L-methionine site. The region spanning 53–275 (ELLRQLFPPE…KHTEETQAIP (223 aa)) is the Bin3-type SAM domain.

This sequence belongs to the methyltransferase superfamily. As to quaternary structure, interacts with DICER1; the interaction may be mediated by RNA.

It is found in the cytoplasm. The enzyme catalyses a 5'-end 5'-phospho-ribonucleoside-RNA + S-adenosyl-L-methionine = a 5'-end (5'-methylphospho)-ribonucleoside-RNA + S-adenosyl-L-homocysteine. The catalysed reaction is a 5'-end 5'-phospho-ribonucleoside-RNA + 2 S-adenosyl-L-methionine = a 5'-end (5'-bismethylphospho)-ribonucleoside-RNA + 2 S-adenosyl-L-homocysteine. Its function is as follows. O-methyltransferase that specifically monomethylates 5'-monophosphate of cytoplasmic histidyl tRNA (tRNA(His)), acting as a capping enzyme by protecting tRNA(His) from cleavage by DICER1. Also able, with less efficiently, to methylate the 5' monophosphate of a subset of pre-miRNAs, acting as a negative regulator of miRNA processing. The 5' monophosphate of pre-miRNAs is recognized by DICER1 and is required for pre-miRNAs processing: methylation at this position reduces the processing of pre-miRNAs by DICER1. Was also reported to mediate dimethylation of pre-miR-145; however dimethylation cannot be reproduced by another group which observes a monomethylation of pre-miR-145. This Rattus norvegicus (Rat) protein is RNA 5'-monophosphate methyltransferase.